The primary structure comprises 287 residues: 3-beta-hydroxysteroid sulfotransferase (287 aa).

44 to 49 contacts 3'-phosphoadenylyl sulfate; sequence KSGTNW. The substrate site is built by Trp72 and Trp77. His99 (proton acceptor) is an active-site residue. 3'-phosphoadenylyl sulfate-binding positions include Arg121, Ser129, Tyr184, 218–223, and 247–249; these read SSFKFM and RKG.

This sequence belongs to the sulfotransferase 1 family. As to quaternary structure, homodimer. Liver, intestine and kidney.

Its subcellular location is the cytoplasm. It carries out the reaction an alcohol + 3'-phosphoadenylyl sulfate = an alkyl sulfate + adenosine 3',5'-bisphosphate + H(+). In terms of biological role, sulfotransferase that utilizes 3'-phospho-5'-adenylyl sulfate (PAPS) as sulfonate donor to catalyze the sulfonation of 3-beta-hydroxyl groups of neutral steroids. High preference for C21 steroid (pregnenolone). This chain is 3-beta-hydroxysteroid sulfotransferase (STD2), found in Cavia porcellus (Guinea pig).